A 380-amino-acid chain; its full sequence is UDP-3-O-acylglucosamine N-acyltransferase (380 aa).

Histidine 263 acts as the Proton acceptor in catalysis.

This sequence belongs to the transferase hexapeptide repeat family. LpxD subfamily. As to quaternary structure, homotrimer.

The enzyme catalyses a UDP-3-O-[(3R)-3-hydroxyacyl]-alpha-D-glucosamine + a (3R)-hydroxyacyl-[ACP] = a UDP-2-N,3-O-bis[(3R)-3-hydroxyacyl]-alpha-D-glucosamine + holo-[ACP] + H(+). It functions in the pathway bacterial outer membrane biogenesis; LPS lipid A biosynthesis. Its function is as follows. Catalyzes the N-acylation of UDP-3-O-acylglucosamine using 3-hydroxyacyl-ACP as the acyl donor. Is involved in the biosynthesis of lipid A, a phosphorylated glycolipid that anchors the lipopolysaccharide to the outer membrane of the cell. This is UDP-3-O-acylglucosamine N-acyltransferase from Rhodopirellula baltica (strain DSM 10527 / NCIMB 13988 / SH1).